We begin with the raw amino-acid sequence, 863 residues long: NACHT, LRR and PYD domains-containing protein 4B (863 aa).

The 93-residue stretch at 1 to 93 (MASLFSDFGF…TNRATGEIAA (93 aa)) folds into the Pyrin domain. Positions 143–466 (KMVVLQGVAG…FYLLHSEMDH (324 aa)) constitute an NACHT domain. 149-156 (GVAGIGKT) lines the ATP pocket. 7 LRR repeats span residues 618-643 (WHQI…IFNE), 683-706 (SYNL…MLCD), 717-740 (ILDL…LRQN), 741-763 (KSLR…ALCR), 765-782 (LTLP…ACQL), 797-824 (YKCL…AMKD), and 843-863 (SQEF…ENGV).

It belongs to the NLRP family.

In terms of biological role, may be involved in inflammation and recognition of cytosolic pathogen-associated molecular patterns (PAMPs) not intercepted by membrane-bound receptors. The chain is NACHT, LRR and PYD domains-containing protein 4B (Nlrp4b) from Mus musculus (Mouse).